The chain runs to 78 residues: Acyl carrier protein (78 aa).

One can recognise a Carrier domain in the interval 2–77 (SSIEERVKKI…LAINYINENL (76 aa)). O-(pantetheine 4'-phosphoryl)serine is present on Ser-37.

The protein belongs to the acyl carrier protein (ACP) family. Post-translationally, 4'-phosphopantetheine is transferred from CoA to a specific serine of apo-ACP by AcpS. This modification is essential for activity because fatty acids are bound in thioester linkage to the sulfhydryl of the prosthetic group.

The protein localises to the cytoplasm. It participates in lipid metabolism; fatty acid biosynthesis. Its function is as follows. Carrier of the growing fatty acid chain in fatty acid biosynthesis. The protein is Acyl carrier protein of Saccharophagus degradans (strain 2-40 / ATCC 43961 / DSM 17024).